Here is a 394-residue protein sequence, read N- to C-terminus: Elongation factor Tu (394 aa).

The 195-residue stretch at 10 to 204 folds into the tr-type G domain; it reads KEHANIGTIG…AVDTYIPTPE (195 aa). Positions 19 to 26 are G1; it reads GHVDHGKT. 19 to 26 contacts GTP; sequence GHVDHGKT. Position 26 (Thr26) interacts with Mg(2+). The tract at residues 60–64 is G2; it reads GITIN. The tract at residues 81–84 is G3; the sequence is DCPG. GTP is bound by residues 81-85 and 136-139; these read DCPGH and NKVD. The tract at residues 136–139 is G4; sequence NKVD. Positions 174–176 are G5; the sequence is SAL.

It belongs to the TRAFAC class translation factor GTPase superfamily. Classic translation factor GTPase family. EF-Tu/EF-1A subfamily. Monomer.

The protein localises to the cytoplasm. The catalysed reaction is GTP + H2O = GDP + phosphate + H(+). Its function is as follows. GTP hydrolase that promotes the GTP-dependent binding of aminoacyl-tRNA to the A-site of ribosomes during protein biosynthesis. The chain is Elongation factor Tu from Staphylococcus aureus (strain COL).